The primary structure comprises 462 residues: Microspherule protein 1 (462 aa).

N-acetylmethionine is present on M1. Residues 1–130 (MDKDSQGLLD…KSKQPLQVTK (130 aa)) form a disordered region. S22 carries the post-translational modification Phosphoserine. Positions 43–55 (PKRRSSSRFIKRK) are enriched in basic residues. Residue S102 is modified to Phosphoserine. Position 103 is a phosphothreonine (T103). Pro residues predominate over residues 103–112 (TPVPPSPAPA). S108 is subject to Phosphoserine. The short motif at 113-123 (PGLTKRVKKSK) is the Nuclear localization signal element. Residues K123 and K130 each carry the N6-acetyllysine modification. The residue at position 282 (S282) is a Phosphoserine. Positions 301–335 (LEHELMVADRRQKREIRQLEQELHKWQVLVDSITG) form a coiled coil. The 57-residue stretch at 363-419 (ITLGRATKDNQIDVDLSLEGPAWKISRKQGVIKLKNNGDFFIANEGRRPIYIDGRPV) folds into the FHA domain. The UBR5-degron signature appears at 389–396 (RKQGVIKL).

In terms of assembly, component of the chromatin remodeling INO80 complex; specifically part of a complex module associated with the N-terminus of INO80. Component of some MLL1/MLL complex, at least composed of the core components KMT2A/MLL1, ASH2L, HCFC1, WDR5 and RBBP5, as well as the facultative components BACC1, CHD8, E2F6, HSP70, INO80C, KANSL1, LAS1L, MAX, MCRS1, MGA, KAT8/MOF, PELP1, PHF20, PRP31, RING2, RUVB1/TIP49A, RUVB2/TIP49B, SENP3, TAF1, TAF4, TAF6, TAF7, TAF9 and TEX10. Component of the NSL complex at least composed of MOF/KAT8, KANSL1, KANSL2, KANSL3, MCRS1, PHF20, OGT1/OGT, WDR5 and HCFC1. Interacts with NOP2. Interacts with PINX1. Interacts with TERT. Interacts with CCDC85B. Interacts with DAXX. Interacts (via N-terminus) with FMR1 (via phosphorylated form). Interacts with FXR1 and FXR2. Interacts (via C-terminus) with NDE1 (via C-terminus); phosphorylation of NDE1 inhibits the interaction. Interacts (via C-terminus) with ZNF375. Interacts (via C-terminus) with active GTP-bound RHEB (via N-terminus) under conditions of high amino acid concentration; the interaction promotes mTORC1 complex activation by RHEB. Interacts (via N-terminus) with the mTORC1 complex; the interaction ensures mTORC1 activation by RHEB. Interacts with DYNC1I1; the interaction is required for the proper distribution of centriolar satellites. Interacts with TTBK2; the interaction is required for recruitment of TTBK2 to the mother centriole. Interacts with KIF2A; the interaction occurs during mitosis and facilitates chromosome alignment. As to quaternary structure, (Microbial infection) Interacts with Herpes simplex virus ICP22. Ubiquitinated by UBR5 when not assembled in the INO80 complex, leading to its degradation: UBR5 recognizes and binds a degron that is not accessible when MCRS1 is part of the INO80 complex. Post-translationally, phosphorylated by AURKA on Ser-35 and/or Ser-36 during mitosis which is required for kinetochore fiber assembly and mitotic progression but not for spindle localization or for chromosome-induced microtuble aster formation. Also phosphorylated by AURKA on Ser-85 and/or Ser-87. Phosphorylated by TTK/MPS1 which enhances recruitment of KIF2A to the minus end of spindle microtubules and facilitates precise chromosome segregation. Detected in testis, and at lower levels in spleen, thymus, prostate, uterus, small intestine, colon and leukocytes.

The protein localises to the nucleus. It is found in the nucleolus. It localises to the cytoplasm. Its subcellular location is the cytoskeleton. The protein resides in the microtubule organizing center. The protein localises to the centrosome. It is found in the spindle pole. It localises to the chromosome. Its subcellular location is the centromere. The protein resides in the kinetochore. The protein localises to the lysosome. It is found in the centriolar satellite. Modulates the transcription repressor activity of DAXX by recruiting it to the nucleolus. As part of the NSL complex, may be involved in acetylation of nucleosomal histone H4 on several lysine residues. Putative regulatory component of the chromatin remodeling INO80 complex which is involved in transcriptional regulation, DNA replication and probably DNA repair. May also be an inhibitor of TERT telomerase activity. Binds to G-quadruplex structures in mRNA. Binds to RNA homomer poly(G) and poly(U). Maintains RHEB at the lysosome in its active GTP-bound form and prevents its interaction with the mTORC1 complex inhibitor TSC2, ensuring activation of the mTORC1 complex by RHEB. Stabilizes the minus ends of kinetochore fibers by protecting them from depolymerization, ensuring functional spindle assembly during mitosis. Following phosphorylation by TTK/MPS1, enhances recruitment of KIF2A to the minus ends of mitotic spindle microtubules which promotes chromosome alignment. Regulates the morphology of microtubule minus ends in mitotic spindle by maintaining them in a closed conformation characterized by the presence of an electron-dense cap. Regulates G2/M transition and spindle assembly during oocyte meiosis. Mediates histone modifications and transcriptional regulation in germinal vesicle oocytes which are required for meiotic progression. Also regulates microtubule nucleation and spindle assembly by activating aurora kinases during oocyte meiosis. Contributes to the establishment of centriolar satellites and also plays a role in primary cilium formation by recruiting TTBK2 to the mother centriole which is necessary for removal of the CP110 cap from the mother centriole, an early step in ciliogenesis. Required for epiblast development during early embryogenesis. Essential for cell viability. The polypeptide is Microspherule protein 1 (MCRS1) (Homo sapiens (Human)).